Here is a 416-residue protein sequence, read N- to C-terminus: Gamma-glutamyl phosphate reductase (416 aa).

It belongs to the gamma-glutamyl phosphate reductase family.

It localises to the cytoplasm. It catalyses the reaction L-glutamate 5-semialdehyde + phosphate + NADP(+) = L-glutamyl 5-phosphate + NADPH + H(+). Its pathway is amino-acid biosynthesis; L-proline biosynthesis; L-glutamate 5-semialdehyde from L-glutamate: step 2/2. In terms of biological role, catalyzes the NADPH-dependent reduction of L-glutamate 5-phosphate into L-glutamate 5-semialdehyde and phosphate. The product spontaneously undergoes cyclization to form 1-pyrroline-5-carboxylate. The chain is Gamma-glutamyl phosphate reductase from Vibrio vulnificus (strain YJ016).